A 258-amino-acid polypeptide reads, in one-letter code: Snake venom serine protease CL2 (258 aa).

A signal peptide spans 1 to 18 (MVLIRVLANLLIIQLSYA). Positions 19–24 (QKSSEL) are excised as a propeptide. The region spanning 25 to 249 (VIGGDECNIN…YTDWIKSIIA (225 aa)) is the Peptidase S1 domain. Disulfide bonds link C31/C163, C50/C66, C98/C256, C142/C210, C174/C189, and C200/C225. A glycan (N-linked (GlcNAc...) asparagine) is linked at N44. H65 serves as the catalytic Charge relay system. A glycan (N-linked (GlcNAc...) asparagine) is linked at N103. D110 serves as the catalytic Charge relay system. N121 is a glycosylation site (N-linked (GlcNAc...) asparagine). Catalysis depends on S204, which acts as the Charge relay system. The N-linked (GlcNAc...) asparagine glycan is linked to N251.

The protein belongs to the peptidase S1 family. Snake venom subfamily. In terms of assembly, monomer. In terms of tissue distribution, expressed by the venom gland.

Its subcellular location is the secreted. Snake venom serine protease that may act in the hemostasis system of the prey. The protein is Snake venom serine protease CL2 of Trimeresurus stejnegeri (Chinese green tree viper).